The primary structure comprises 268 residues: Zinc transporter ZupT (268 aa).

The next 8 membrane-spanning stretches (helical) occupy residues 5–25, 36–56, 75–95, 124–144, 157–177, 187–207, 211–231, and 248–268; these read ILFAFALTLFAGLSTGVGSLI, VLTISLGFSAGVMIYVAMIEI, VVTVLSFFAGIFLIALIDKLI, MGLFSAVAIGIHNFPEGLATF, IAVAIAIHNIPEGLAVSAPIF, FILSFLSGLAEPVGALIGYFL, FFSPSLFGVVFGAVAGIMVYI, and FAIGGVIAGMVVMAISLLLFT. Residues Asn136 and Glu139 each contribute to the Fe(2+) site. Positions 139 and 164 each coordinate Zn(2+). Asn165, Glu168, and Glu197 together coordinate Fe(2+). Zn(2+) is bound at residue Glu168.

It belongs to the ZIP transporter (TC 2.A.5) family. ZupT subfamily.

The protein resides in the cell membrane. It carries out the reaction Zn(2+)(in) = Zn(2+)(out). Mediates zinc uptake. May also transport other divalent cations. In Chlorobium chlorochromatii (strain CaD3), this protein is Zinc transporter ZupT.